Here is a 125-residue protein sequence, read N- to C-terminus: Small ribosomal subunit protein eS6 (125 aa).

The protein belongs to the eukaryotic ribosomal protein eS6 family.

This is Small ribosomal subunit protein eS6 from Pyrococcus horikoshii (strain ATCC 700860 / DSM 12428 / JCM 9974 / NBRC 100139 / OT-3).